Reading from the N-terminus, the 445-residue chain is Phosphoglucosamine mutase (445 aa).

The Phosphoserine intermediate role is filled by Ser102. Mg(2+) contacts are provided by Ser102, Asp241, Asp243, and Asp245. Phosphoserine is present on Ser102.

This sequence belongs to the phosphohexose mutase family. Requires Mg(2+) as cofactor. Activated by phosphorylation.

It catalyses the reaction alpha-D-glucosamine 1-phosphate = D-glucosamine 6-phosphate. In terms of biological role, catalyzes the conversion of glucosamine-6-phosphate to glucosamine-1-phosphate. This chain is Phosphoglucosamine mutase, found in Pectobacterium carotovorum subsp. carotovorum (strain PC1).